Consider the following 370-residue polypeptide: Phospho-N-acetylmuramoyl-pentapeptide-transferase (370 aa).

Helical transmembrane passes span 24 to 44 (YLTF…VAMG), 78 to 98 (TMGG…WADL), 103 to 123 (VWVV…DDYA), 138 to 158 (KLVA…LFAP), 177 to 197 (ALVI…IAGF), 209 to 229 (GLAI…AYLV), 245 to 265 (GVGE…GFLW), 273 to 293 (IFMG…IAVC), 298 to 318 (LVLG…MIQV), and 347 to 367 (TVVI…LATL).

The protein belongs to the glycosyltransferase 4 family. MraY subfamily. It depends on Mg(2+) as a cofactor.

It is found in the cell inner membrane. It catalyses the reaction UDP-N-acetyl-alpha-D-muramoyl-L-alanyl-gamma-D-glutamyl-meso-2,6-diaminopimeloyl-D-alanyl-D-alanine + di-trans,octa-cis-undecaprenyl phosphate = di-trans,octa-cis-undecaprenyl diphospho-N-acetyl-alpha-D-muramoyl-L-alanyl-D-glutamyl-meso-2,6-diaminopimeloyl-D-alanyl-D-alanine + UMP. Its pathway is cell wall biogenesis; peptidoglycan biosynthesis. In terms of biological role, catalyzes the initial step of the lipid cycle reactions in the biosynthesis of the cell wall peptidoglycan: transfers peptidoglycan precursor phospho-MurNAc-pentapeptide from UDP-MurNAc-pentapeptide onto the lipid carrier undecaprenyl phosphate, yielding undecaprenyl-pyrophosphoryl-MurNAc-pentapeptide, known as lipid I. The sequence is that of Phospho-N-acetylmuramoyl-pentapeptide-transferase from Caulobacter vibrioides (strain NA1000 / CB15N) (Caulobacter crescentus).